A 210-amino-acid polypeptide reads, in one-letter code: Large ribosomal subunit protein uL4 (210 aa).

Residues 41-51 are compositionally biased toward polar residues; sequence ANARQGTQSTK. Disordered stretches follow at residues 41-60 and 67-98; these read ANARQGTQSTKTRGEVQGSS and KGTGNARMGTNRSPVRRHGGVAFGPRPRDFSK.

Belongs to the universal ribosomal protein uL4 family. Part of the 50S ribosomal subunit.

In terms of biological role, one of the primary rRNA binding proteins, this protein initially binds near the 5'-end of the 23S rRNA. It is important during the early stages of 50S assembly. It makes multiple contacts with different domains of the 23S rRNA in the assembled 50S subunit and ribosome. Functionally, forms part of the polypeptide exit tunnel. This Dehalococcoides mccartyi (strain ATCC BAA-2266 / KCTC 15142 / 195) (Dehalococcoides ethenogenes (strain 195)) protein is Large ribosomal subunit protein uL4.